We begin with the raw amino-acid sequence, 362 residues long: MPNFEQNQVIAVGLSGGVDSSVAALVLKEKGYEVIGLFMQNWETDSKDPFCTAEQDLSDAKAIADHIGIPLYVVNFSKAYWNHVFQHCLDEFAQGRTPNPDVWCNREIKFKSLLDHAKKLGATHLATGHYACIQNENNEYRLLKSNDSHKDQSYFLHLLNQYQLANSVFPIGGYQKSEVRAIAKKRGFINHAKKDSTGICFIGERKFKDFLNEFLLAQPGNIETPEGKIIGKHDGIMFYTVGQRKGLHIGGRPDAGEAPWYVVDKDVKRNVLIVVQGYEHPLLYSQELTCTNLHWIRDTEPSFPLTCKAKTRCRQADQTCVVTRLDNDHCHVQFEHPQRAITRGQSVVFYLGNECLGGGIIN.

Residues 13-20 (GLSGGVDS) and Met-39 contribute to the ATP site. Positions 99-101 (NPD) are interaction with target base in tRNA. Cys-104 serves as the catalytic Nucleophile. Cys-104 and Cys-200 are disulfide-bonded. Gly-128 is an ATP binding site. Residues 150–152 (KDQ) form an interaction with tRNA region. Cys-200 functions as the Cysteine persulfide intermediate in the catalytic mechanism.

It belongs to the MnmA/TRMU family.

The protein localises to the cytoplasm. It carries out the reaction S-sulfanyl-L-cysteinyl-[protein] + uridine(34) in tRNA + AH2 + ATP = 2-thiouridine(34) in tRNA + L-cysteinyl-[protein] + A + AMP + diphosphate + H(+). Functionally, catalyzes the 2-thiolation of uridine at the wobble position (U34) of tRNA, leading to the formation of s(2)U34. This is tRNA-specific 2-thiouridylase MnmA from Coxiella burnetii (strain Dugway 5J108-111).